The sequence spans 202 residues: MGGPELEQLIALLARLPGLGPRSARRAALRLLQQPETRLLPLAAAMQNAARAVKTCRVCGNLDSADPCSVCTDPSRENGLICVVESVGDLWAMDRAGIYRGLYHVLGGVLSALAGTGPDALNWPALMRRIESSRPSATPVTEVILALGATVDGATTAHWLAEQLRPMGVSVTRLAQGIPIGGALDVLDDGTLAAAMRARRSA.

The C4-type zinc-finger motif lies at Cys56 to Cys71. A Toprim domain is found at Gly79–Pro179.

Belongs to the RecR family.

In terms of biological role, may play a role in DNA repair. It seems to be involved in an RecBC-independent recombinational process of DNA repair. It may act with RecF and RecO. The protein is Recombination protein RecR of Granulibacter bethesdensis (strain ATCC BAA-1260 / CGDNIH1).